The chain runs to 254 residues: Polysaccharide deacetylase domain-containing protein ECU11_0510 (254 aa).

Positions 26 to 210 (GMIAINFVDG…IGKDKGYRFV (185 aa)) constitute a NodB homology domain.

This chain is Polysaccharide deacetylase domain-containing protein ECU11_0510, found in Encephalitozoon cuniculi (strain GB-M1) (Microsporidian parasite).